A 287-amino-acid chain; its full sequence is Orotidine 5'-phosphate decarboxylase (287 aa).

K97 acts as the Proton donor in catalysis.

It belongs to the OMP decarboxylase family. Type 2 subfamily.

The catalysed reaction is orotidine 5'-phosphate + H(+) = UMP + CO2. The protein operates within pyrimidine metabolism; UMP biosynthesis via de novo pathway; UMP from orotate: step 2/2. This chain is Orotidine 5'-phosphate decarboxylase, found in Clostridium perfringens (strain ATCC 13124 / DSM 756 / JCM 1290 / NCIMB 6125 / NCTC 8237 / Type A).